A 117-amino-acid chain; its full sequence is Ribonuclease P protein component (117 aa).

Belongs to the RnpA family. As to quaternary structure, consists of a catalytic RNA component (M1 or rnpB) and a protein subunit.

The catalysed reaction is Endonucleolytic cleavage of RNA, removing 5'-extranucleotides from tRNA precursor.. Its function is as follows. RNaseP catalyzes the removal of the 5'-leader sequence from pre-tRNA to produce the mature 5'-terminus. It can also cleave other RNA substrates such as 4.5S RNA. The protein component plays an auxiliary but essential role in vivo by binding to the 5'-leader sequence and broadening the substrate specificity of the ribozyme. The protein is Ribonuclease P protein component of Thermotoga petrophila (strain ATCC BAA-488 / DSM 13995 / JCM 10881 / RKU-1).